The sequence spans 352 residues: 4-hydroxy-3-methylbut-2-enyl diphosphate reductase (352 aa).

Residue Cys36 participates in [4Fe-4S] cluster binding. (2E)-4-hydroxy-3-methylbut-2-enyl diphosphate contacts are provided by His76 and His114. Positions 76 and 114 each coordinate dimethylallyl diphosphate. Positions 76 and 114 each coordinate isopentenyl diphosphate. Cys136 serves as a coordination point for [4Fe-4S] cluster. His164 provides a ligand contact to (2E)-4-hydroxy-3-methylbut-2-enyl diphosphate. His164 contributes to the dimethylallyl diphosphate binding site. His164 provides a ligand contact to isopentenyl diphosphate. The active-site Proton donor is the Glu166. Residue Thr204 participates in (2E)-4-hydroxy-3-methylbut-2-enyl diphosphate binding. Cys234 is a binding site for [4Fe-4S] cluster. (2E)-4-hydroxy-3-methylbut-2-enyl diphosphate contacts are provided by Ser262, Ser263, Asn264, and Ser309. Ser262, Ser263, Asn264, and Ser309 together coordinate dimethylallyl diphosphate. Positions 262, 263, 264, and 309 each coordinate isopentenyl diphosphate.

It belongs to the IspH family. [4Fe-4S] cluster serves as cofactor.

The enzyme catalyses isopentenyl diphosphate + 2 oxidized [2Fe-2S]-[ferredoxin] + H2O = (2E)-4-hydroxy-3-methylbut-2-enyl diphosphate + 2 reduced [2Fe-2S]-[ferredoxin] + 2 H(+). The catalysed reaction is dimethylallyl diphosphate + 2 oxidized [2Fe-2S]-[ferredoxin] + H2O = (2E)-4-hydroxy-3-methylbut-2-enyl diphosphate + 2 reduced [2Fe-2S]-[ferredoxin] + 2 H(+). It participates in isoprenoid biosynthesis; dimethylallyl diphosphate biosynthesis; dimethylallyl diphosphate from (2E)-4-hydroxy-3-methylbutenyl diphosphate: step 1/1. Its pathway is isoprenoid biosynthesis; isopentenyl diphosphate biosynthesis via DXP pathway; isopentenyl diphosphate from 1-deoxy-D-xylulose 5-phosphate: step 6/6. Its function is as follows. Catalyzes the conversion of 1-hydroxy-2-methyl-2-(E)-butenyl 4-diphosphate (HMBPP) into a mixture of isopentenyl diphosphate (IPP) and dimethylallyl diphosphate (DMAPP). Acts in the terminal step of the DOXP/MEP pathway for isoprenoid precursor biosynthesis. This chain is 4-hydroxy-3-methylbut-2-enyl diphosphate reductase, found in Bifidobacterium longum (strain NCC 2705).